We begin with the raw amino-acid sequence, 234 residues long: DNA repair protein RecO (234 aa).

Belongs to the RecO family.

Its function is as follows. Involved in DNA repair and RecF pathway recombination. The polypeptide is DNA repair protein RecO (Idiomarina loihiensis (strain ATCC BAA-735 / DSM 15497 / L2-TR)).